The chain runs to 376 residues: Protein-tyrosine sulfotransferase 2 (376 aa).

Over 1–8 (MRLSVRKV) the chain is Cytoplasmic. Residues 9–25 (LLAAGCALALVLAVQLG) form a helical; Signal-anchor for type II membrane protein membrane-spanning segment. Topologically, residues 26-376 (QQVLECRAVL…NSTSPHLGSS (351 aa)) are lumenal. 77–81 (RSGTT) serves as a coordination point for 3'-phosphoadenylyl sulfate. The cysteines at positions 95 and 155 are disulfide-linked. The Proton donor/acceptor role is filled by Glu-98. An interaction with peptide substrate region spans residues 100-104 (RIIPR). Arg-182, Ser-190, and Arg-194 together coordinate 3'-phosphoadenylyl sulfate. A disulfide bridge links Cys-224 with Cys-232. Residues Tyr-237, 284 to 293 (STDQVIKPVN), and Lys-299 contribute to the 3'-phosphoadenylyl sulfate site. Residues Asn-342 and Asn-367 are each glycosylated (N-linked (GlcNAc...) asparagine).

Belongs to the protein sulfotransferase family. In terms of assembly, homodimer. Can also form heterodimers with TPST1. Post-translationally, N-glycosylated. In terms of tissue distribution, widely expressed.

The protein resides in the golgi apparatus membrane. It carries out the reaction L-tyrosyl-[protein] + 3'-phosphoadenylyl sulfate = O-sulfo-L-tyrosine-[protein] + adenosine 3',5'-bisphosphate + H(+). Catalyzes the O-sulfation of tyrosine residues within acidic motifs of polypeptides, using 3'-phosphoadenylyl sulfate (PAPS) as cosubstrate. In Mus musculus (Mouse), this protein is Protein-tyrosine sulfotransferase 2 (Tpst2).